The following is an 825-amino-acid chain: Putative pentatricopeptide repeat-containing protein At2g01510 (825 aa).

17 PPR repeats span residues aspartate 47–lysine 77, asparagine 78–arginine 108, threonine 109–threonine 143, aspartate 146–threonine 180, phenylalanine 183–lysine 213, aspartate 214–proline 248, serine 249–arginine 283, aspartate 284–leucine 314, aspartate 315–arginine 349, arginine 350–serine 384, isoleucine 385–arginine 415, threonine 416–alanine 450, aspartate 451–glutamate 485, asparagine 486–arginine 516, asparagine 517–proline 551, aspartate 552–proline 587, and lysine 588–glutamate 618. The interval methionine 623–asparagine 699 is type E motif. The type E(+) motif stretch occupies residues histidine 700–glutamate 730. Residues arginine 731 to tryptophan 825 are type DYW motif.

The protein belongs to the PPR family. PCMP-H subfamily.

This chain is Putative pentatricopeptide repeat-containing protein At2g01510 (PCMP-H36), found in Arabidopsis thaliana (Mouse-ear cress).